A 121-amino-acid polypeptide reads, in one-letter code: Ribonuclease P protein component (121 aa).

The protein belongs to the RnpA family. Consists of a catalytic RNA component (M1 or rnpB) and a protein subunit.

The enzyme catalyses Endonucleolytic cleavage of RNA, removing 5'-extranucleotides from tRNA precursor.. In terms of biological role, RNaseP catalyzes the removal of the 5'-leader sequence from pre-tRNA to produce the mature 5'-terminus. It can also cleave other RNA substrates such as 4.5S RNA. The protein component plays an auxiliary but essential role in vivo by binding to the 5'-leader sequence and broadening the substrate specificity of the ribozyme. The sequence is that of Ribonuclease P protein component from Neisseria meningitidis serogroup A / serotype 4A (strain DSM 15465 / Z2491).